We begin with the raw amino-acid sequence, 76 residues long: Protein krueppel (76 aa).

2 consecutive C2H2-type zinc fingers follow at residues 11–33 (FECS…LRLH) and 39–61 (YSCP…LRVH).

Belongs to the krueppel C2H2-type zinc-finger protein family.

The protein localises to the nucleus. In terms of biological role, krueppel is a gap class segmentation protein. The sequence is that of Protein krueppel (Kr) from Manduca sexta (Tobacco hawkmoth).